We begin with the raw amino-acid sequence, 733 residues long: Zinc finger transcription factor ace1 (733 aa).

Residues 1-11 (MSFSNPRRRTP) are compositionally biased toward basic residues. 3 disordered regions span residues 1 to 22 (MSFS…CEHG), 34 to 63 (GATF…SQSA), and 89 to 183 (ASLS…SSTT). Residues 39–49 (SPTSPSASSAA) are compositionally biased toward low complexity. Over residues 132 to 142 (LRPRSVRRTRN) the composition is skewed to basic residues. Positions 148 to 158 (GIGSSVVSTND) are enriched in polar residues. The segment covering 171 to 183 (ASALTRSAASSTT) has biased composition (low complexity). C2H2-type zinc fingers lie at residues 400–424 (KKCR…EKTH), 428–456 (WKCP…NDKH), and 463–488 (YECL…EKAH). Residues 497 to 533 (TNGKKAPSQNGSTAQQTPPLANVSTPSSTPSYSVPTP) are disordered. The span at 503-515 (PSQNGSTAQQTPP) shows a compositional bias: polar residues. Positions 519 to 530 (VSTPSSTPSYSV) are enriched in low complexity.

It is found in the nucleus. Functionally, binds to the promoter of the cbh1 gene and activates transcription. In Hypocrea jecorina (Trichoderma reesei), this protein is Zinc finger transcription factor ace1 (ace1).